Here is a 185-residue protein sequence, read N- to C-terminus: Nodulin-20 (185 aa).

The signal sequence occupies residues 1-17 (MRVVLITLFLFIGAAVA).

Belongs to the nodulin 20 family.

It is found in the symbiosome. Its subcellular location is the peribacteroid membrane. The protein resides in the peribacteroid space. This is Nodulin-20 from Glycine max (Soybean).